We begin with the raw amino-acid sequence, 191 residues long: UPF0398 protein LSEI_1479 (191 aa).

Belongs to the UPF0398 family.

In Lacticaseibacillus paracasei (strain ATCC 334 / BCRC 17002 / CCUG 31169 / CIP 107868 / KCTC 3260 / NRRL B-441) (Lactobacillus paracasei), this protein is UPF0398 protein LSEI_1479.